The sequence spans 306 residues: Ornithine carbamoyltransferase 1, anabolic (306 aa).

Carbamoyl phosphate-binding positions include 53–56 (STRT), Gln-80, Arg-104, and 131–134 (HPCQ). Residues Asn-162, Asp-219, and 223–224 (SM) each bind L-ornithine. Carbamoyl phosphate-binding positions include 259–260 (CL) and Arg-287.

The protein belongs to the aspartate/ornithine carbamoyltransferase superfamily. OTCase family. Homotrimer.

The protein resides in the cytoplasm. The catalysed reaction is carbamoyl phosphate + L-ornithine = L-citrulline + phosphate + H(+). It functions in the pathway amino-acid biosynthesis; L-arginine biosynthesis; L-arginine from L-ornithine and carbamoyl phosphate: step 1/3. With respect to regulation, reversibly inhibited by inhibited by phaseolotoxin and octicidine. Its function is as follows. Reversibly catalyzes the transfer of the carbamoyl group from carbamoyl phosphate (CP) to the N(epsilon) atom of ornithine (ORN) to produce L-citrulline, which is a substrate for argininosuccinate synthetase, the enzyme involved in the final step in arginine biosynthesis. The protein is Ornithine carbamoyltransferase 1, anabolic of Pseudomonas savastanoi pv. phaseolicola (Pseudomonas syringae pv. phaseolicola).